The chain runs to 507 residues: Protein MosB (507 aa).

A DNA-binding region (H-T-H motif) is located at residues glutamine 256–cysteine 275. At lysine 282 the chain carries N6-(pyridoxal phosphate)lysine.

Belongs to the DegT/DnrJ/EryC1 family.

Involved in the biosynthesis of the rhizopine 3-O-methyl-scyllo-inosamine. May have a regulatory role in controlling the housekeeping genes within the nodule which are involved in the biosynthesis of the rhizopine backbone. This is Protein MosB (mosB) from Rhizobium meliloti (Ensifer meliloti).